The chain runs to 1419 residues: L-2-aminoadipate reductase (1419 aa).

The Carrier domain maps to 880–956 (ETLTATERDI…GLAKEIERMK (77 aa)). An O-(pantetheine 4'-phosphoryl)serine modification is found at Ser916.

Belongs to the ATP-dependent AMP-binding enzyme family. Pantetheine 4'-phosphate serves as cofactor.

It is found in the cytoplasm. It carries out the reaction (S)-2-amino-6-oxohexanoate + NADP(+) + H2O = L-2-aminoadipate + NADPH + 2 H(+). The catalysed reaction is (S)-2-amino-6-oxohexanoate + NAD(+) + H2O = L-2-aminoadipate + NADH + 2 H(+). The enzyme catalyses (S)-2-amino-6-oxohexanoate + AMP + diphosphate + NADP(+) = L-2-aminoadipate + ATP + NADPH + H(+). It participates in amino-acid biosynthesis; L-lysine biosynthesis via AAA pathway; L-lysine from L-alpha-aminoadipate (fungal route): step 1/3. Catalyzes the activation of alpha-aminoadipate by ATP-dependent adenylation and the reduction of activated alpha-aminoadipate by NADPH. The activated alpha-aminoadipate is bound to the phosphopantheinyl group of the enzyme itself before it is reduced to (S)-2-amino-6-oxohexanoate. The sequence is that of L-2-aminoadipate reductase (lys1) from Schizosaccharomyces pombe (strain 972 / ATCC 24843) (Fission yeast).